The primary structure comprises 487 residues: Malonate-semialdehyde dehydrogenase (487 aa).

The NAD(+) site is built by alanine 150, phenylalanine 152, lysine 176, glutamate 179, arginine 180, serine 229, and threonine 251. Cysteine 284 functions as the Nucleophile in the catalytic mechanism. Glutamate 382 is a binding site for NAD(+).

It belongs to the aldehyde dehydrogenase family. IolA subfamily. In terms of assembly, homotetramer.

The catalysed reaction is 3-oxopropanoate + NAD(+) + CoA + H2O = hydrogencarbonate + acetyl-CoA + NADH + H(+). It catalyses the reaction 2-methyl-3-oxopropanoate + NAD(+) + CoA + H2O = propanoyl-CoA + hydrogencarbonate + NADH + H(+). It functions in the pathway polyol metabolism; myo-inositol degradation into acetyl-CoA; acetyl-CoA from myo-inositol: step 7/7. Catalyzes the oxidation of malonate semialdehyde (MSA) and methylmalonate semialdehyde (MMSA) into acetyl-CoA and propanoyl-CoA, respectively. Is involved in a myo-inositol catabolic pathway. Bicarbonate, and not CO2, is the end-product of the enzymatic reaction. The sequence is that of Malonate-semialdehyde dehydrogenase from Bacillus subtilis subsp. natto.